Here is a 400-residue protein sequence, read N- to C-terminus: Elongation factor Tu-B (400 aa).

The region spanning 10–209 (KPHVNVGTIG…VVDEYIPTPE (200 aa)) is the tr-type G domain. Residues 19 to 26 (GHVDHGKT) form a G1 region. GTP is bound at residue 19–26 (GHVDHGKT). T26 contacts Mg(2+). Positions 60–64 (GITIN) are G2. A G3 region spans residues 81–84 (DCPG). Residues 81 to 85 (DCPGH) and 136 to 139 (NKAD) each bind GTP. Residues 136–139 (NKAD) are G4. The segment at 174-176 (SAL) is G5.

It belongs to the TRAFAC class translation factor GTPase superfamily. Classic translation factor GTPase family. EF-Tu/EF-1A subfamily. In terms of assembly, monomer.

It is found in the cytoplasm. The catalysed reaction is GTP + H2O = GDP + phosphate + H(+). Its function is as follows. GTP hydrolase that promotes the GTP-dependent binding of aminoacyl-tRNA to the A-site of ribosomes during protein biosynthesis. The sequence is that of Elongation factor Tu-B from Caldanaerobacter subterraneus subsp. tengcongensis (strain DSM 15242 / JCM 11007 / NBRC 100824 / MB4) (Thermoanaerobacter tengcongensis).